The sequence spans 750 residues: uncharacterized protein (750 aa).

3 helical membrane-spanning segments follow: residues 1 to 21, 465 to 485, and 586 to 606; these read MSII…SIVT, YGAN…ISYL, and GMFG…VAVS.

It localises to the membrane. This is an uncharacterized protein from Saccharomyces cerevisiae (strain ATCC 204508 / S288c) (Baker's yeast).